We begin with the raw amino-acid sequence, 306 residues long: MTASLHIILDTDPGIDDAAAIAAALFAPQLDLQLITTVAGNVSVEKTTRNALQLLHFWNSDIPLAQGAATPLLRPLRDAAYVHGESGMEGYDFVDHQRQPLAKPAFIAIRDVLMNAPEPMTLVAIGPLTNIALLLMHYPECACNIRRLVLMGGSAGRGNFTPNAEFNIAVDPEAAALVFRSGLEIVMCGLDVTNQAMLSPDFLNKLPALNRTGKMLHSLFNHYRSGSMRTGVRMHDLCAIAWLVRPELFTLQSCFVAVETQGEYTAGTTVVDIEGRLGQPANAQVALALDVDGFRQWVAEVFAYAP.

Residue His-235 is part of the active site.

Belongs to the IUNH family. RihC subfamily.

Hydrolyzes both purine and pyrimidine ribonucleosides with a broad-substrate specificity. This is Non-specific ribonucleoside hydrolase RihC from Salmonella paratyphi C (strain RKS4594).